A 114-amino-acid chain; its full sequence is Seed trypsin/chymotrypsin inhibitor TI5-72 (114 aa).

The first 28 residues, 1 to 28, serve as a signal peptide directing secretion; the sequence is MELMNKKVMMKLALMVFLLSFAANVVNA. The propeptide occupies 29-42; it reads RFDSTSFITQVLSN. Intrachain disulfides connect Cys-50/Cys-103, Cys-51/Cys-66, Cys-54/Cys-99, Cys-56/Cys-64, Cys-73/Cys-80, Cys-77/Cys-92, and Cys-82/Cys-90.

Belongs to the Bowman-Birk serine protease inhibitor family. As to expression, seed.

In terms of biological role, inhibitor of trypsin and of chymotrypsin. May function as a natural phytochemical defense against predators. This is Seed trypsin/chymotrypsin inhibitor TI5-72 (TI572) from Pisum sativum (Garden pea).